A 222-amino-acid chain; its full sequence is MKHKIKLKGSFSLNEKDILDFHPWVKPLLEEVRNRGWNYEFSDVKAEVLVELDLDELKLDLRYYPPRLERFEEGGTYEISAEVGSEPPAVLKVLSIESFKVRVSTKNCWNAAEIDPFKREVNSIKDVLWAFGEEVDKLSQAREVYEVARWLIEKGFKPANNYVIKDYKKLVDMFEKPYKFAVTLEIAVEDENKVPGWEELKKELSKFFYERGTFGGAENGSV.

This is an uncharacterized protein from Archaeoglobus fulgidus (strain ATCC 49558 / DSM 4304 / JCM 9628 / NBRC 100126 / VC-16).